Here is a 255-residue protein sequence, read N- to C-terminus: 5'-nucleotidase SurE (255 aa).

A divalent metal cation is bound by residues Asp8, Asp9, Ser40, and Asn93.

It belongs to the SurE nucleotidase family. The cofactor is a divalent metal cation.

It localises to the cytoplasm. The catalysed reaction is a ribonucleoside 5'-phosphate + H2O = a ribonucleoside + phosphate. In terms of biological role, nucleotidase that shows phosphatase activity on nucleoside 5'-monophosphates. This chain is 5'-nucleotidase SurE, found in Bradyrhizobium sp. (strain BTAi1 / ATCC BAA-1182).